A 729-amino-acid chain; its full sequence is Receptor-like protein 2 (729 aa).

The N-terminal stretch at 1–44 is a signal peptide; the sequence is MRSKAKGLVRPLITKPVQPLSSHMHLFLLCILFLSALFLTLSEA. An N-cap region spans residues 45 to 82; the sequence is VCNLQDRESLIWFSGNVSSSVSPLNWNLSIDCCSWEGI. Over 45–707 the chain is Extracellular; the sequence is VCNLQDRESL…AKENDELNRT (663 aa). Asparagine 60 and asparagine 71 each carry an N-linked (GlcNAc...) asparagine glycan. 20 LRR repeats span residues 89–113, 114–137, 139–163, 168–193, 195–219, 220–244, 245–268, 269–292, 293–316, 317–340, 342–364, 365–389, 391–413, 414–437, 439–464, 468–492, 493–515, 516–540, 542–560, and 561–584; these read DSHV…VQNI, HRLS…FFST, DQLM…AFGN, FFSI…VYLQ, TINL…MCRS, SPQL…LGRC, LRLT…IYNL, SELE…ITRL, RKLT…IGNL, SSLR…LANC, KLVK…EFSQ, LQSL…IFSC, SLTA…VLEL, ESLS…SILQ, CRKL…DFLS, FPKL…LINL, NKVE…WLGT, LPDL…LFQL, ALMS…PIFL, and NPNN…IYIR. Residues asparagine 145 and asparagine 163 are each glycosylated (N-linked (GlcNAc...) asparagine). Asparagine 202 and asparagine 205 each carry an N-linked (GlcNAc...) asparagine glycan. Residues asparagine 256, asparagine 267, asparagine 288, asparagine 315, asparagine 330, and asparagine 339 are each glycosylated (N-linked (GlcNAc...) asparagine). The N-linked (GlcNAc...) asparagine glycan is linked to asparagine 375. A glycan (N-linked (GlcNAc...) asparagine) is linked at asparagine 428. Asparagine 564, asparagine 587, asparagine 611, asparagine 622, asparagine 635, asparagine 657, and asparagine 705 each carry an N-linked (GlcNAc...) asparagine glycan. LRR repeat units follow at residues 599-623, 624-647, and 649-672; these read LKVL…LSNL, TNLE…LTNL, and FLSY…QFDT. Positions 690–707 are C-cap/acidic domain; that stretch reads LTSCKPTRAKENDELNRT. Residues 708 to 728 form a helical membrane-spanning segment; the sequence is FLMGIAIGYFLSFVSILVVRA. Tryptophan 729 is a topological domain (cytoplasmic).

The protein belongs to the RLP family.

Its subcellular location is the cell membrane. Its function is as follows. Involved in the perception of CLV3 and CLV3-like peptides, that act as extracellular signals regulating meristems maintenance. This is Receptor-like protein 2 from Arabidopsis thaliana (Mouse-ear cress).